A 224-amino-acid chain; its full sequence is Holliday junction branch migration complex subunit RuvA (224 aa).

The interval Met1–Pro64 is domain I. A domain II region spans residues Thr65–Ala143. Residues Gly141 to Asn185 are disordered. Positions Ala144–Pro170 are flexible linker. The interval Pro171–Ser224 is domain III.

The protein belongs to the RuvA family. As to quaternary structure, homotetramer. Forms an RuvA(8)-RuvB(12)-Holliday junction (HJ) complex. HJ DNA is sandwiched between 2 RuvA tetramers; dsDNA enters through RuvA and exits via RuvB. An RuvB hexamer assembles on each DNA strand where it exits the tetramer. Each RuvB hexamer is contacted by two RuvA subunits (via domain III) on 2 adjacent RuvB subunits; this complex drives branch migration. In the full resolvosome a probable DNA-RuvA(4)-RuvB(12)-RuvC(2) complex forms which resolves the HJ.

The protein localises to the cytoplasm. Functionally, the RuvA-RuvB-RuvC complex processes Holliday junction (HJ) DNA during genetic recombination and DNA repair, while the RuvA-RuvB complex plays an important role in the rescue of blocked DNA replication forks via replication fork reversal (RFR). RuvA specifically binds to HJ cruciform DNA, conferring on it an open structure. The RuvB hexamer acts as an ATP-dependent pump, pulling dsDNA into and through the RuvAB complex. HJ branch migration allows RuvC to scan DNA until it finds its consensus sequence, where it cleaves and resolves the cruciform DNA. This chain is Holliday junction branch migration complex subunit RuvA, found in Cereibacter sphaeroides (strain KD131 / KCTC 12085) (Rhodobacter sphaeroides).